A 320-amino-acid polypeptide reads, in one-letter code: o-succinylbenzoate synthase (320 aa).

Residue K133 is the Proton donor of the active site. Residues D161, E190, and D213 each coordinate Mg(2+). Residue K235 is the Proton acceptor of the active site.

Belongs to the mandelate racemase/muconate lactonizing enzyme family. MenC type 1 subfamily. Requires a divalent metal cation as cofactor.

It carries out the reaction (1R,6R)-6-hydroxy-2-succinyl-cyclohexa-2,4-diene-1-carboxylate = 2-succinylbenzoate + H2O. The protein operates within quinol/quinone metabolism; 1,4-dihydroxy-2-naphthoate biosynthesis; 1,4-dihydroxy-2-naphthoate from chorismate: step 4/7. It participates in quinol/quinone metabolism; menaquinone biosynthesis. Converts 2-succinyl-6-hydroxy-2,4-cyclohexadiene-1-carboxylate (SHCHC) to 2-succinylbenzoate (OSB). The protein is o-succinylbenzoate synthase of Salmonella heidelberg (strain SL476).